The sequence spans 290 residues: Ribonuclease HIII (290 aa).

One can recognise an RNase H type-2 domain in the interval 78–290 (LPLIGTDEVG…FKNTEKAKNA (213 aa)). Positions 84, 85, and 187 each coordinate a divalent metal cation.

It belongs to the RNase HII family. RnhC subfamily. Mn(2+) is required as a cofactor. The cofactor is Mg(2+).

The protein localises to the cytoplasm. It carries out the reaction Endonucleolytic cleavage to 5'-phosphomonoester.. Functionally, endonuclease that specifically degrades the RNA of RNA-DNA hybrids. The sequence is that of Ribonuclease HIII from Streptococcus pneumoniae (strain CGSP14).